Consider the following 231-residue polypeptide: Orotidine 5'-phosphate decarboxylase (231 aa).

Substrate-binding positions include D11, K33, D60–T69, T120, R181, Q190, G210, and R211. Catalysis depends on K62, which acts as the Proton donor.

Belongs to the OMP decarboxylase family. Type 1 subfamily. Homodimer.

The enzyme catalyses orotidine 5'-phosphate + H(+) = UMP + CO2. It functions in the pathway pyrimidine metabolism; UMP biosynthesis via de novo pathway; UMP from orotate: step 2/2. Its function is as follows. Catalyzes the decarboxylation of orotidine 5'-monophosphate (OMP) to uridine 5'-monophosphate (UMP). The chain is Orotidine 5'-phosphate decarboxylase from Vibrio cholerae serotype O1 (strain ATCC 39315 / El Tor Inaba N16961).